Consider the following 1669-residue polypeptide: Collagen alpha-3(IV) chain (1669 aa).

The N-terminal stretch at 1 to 28 (MHSKTAPRFLVFLLLTLLLLLAASPVAS) is a signal peptide. The segment at 29-42 (KGCVCKGKGQCLCA) is 7S domain. A triple-helical region region spans residues 43–1436 (GTKGEKGEKG…KGNPGDRGTP (1394 aa)). Disordered regions lie at residues 44 to 473 (TKGE…EPGS) and 500 to 1439 (PGGR…PATG). The span at 54-68 (PGSPGFPGQKGFPGP) shows a compositional bias: low complexity. Residues 105–114 (PGLPGLPGHP) show a composition bias toward pro residues. N-linked (GlcNAc...) asparagine glycosylation is present at Asn126. Residues 188–200 (PGFPGPAGPPGPP) show a composition bias toward pro residues. The span at 202–211 (FFGLPGAMGP) shows a compositional bias: low complexity. N-linked (GlcNAc...) asparagine glycosylation occurs at Asn253. Residues 255–269 (SDFKGEKGDEGERGE) show a composition bias toward basic and acidic residues. Low complexity-rich tracts occupy residues 279 to 290 (PGDSYGSEKGAP) and 382 to 393 (SPGLSRPGLRGP). Positions 416–437 (PPGPLGCPGSPGPPGPPGPPGC) are enriched in pro residues. Over residues 551–560 (NPGDPGLRGL) the composition is skewed to low complexity. 2 stretches are compositionally biased toward pro residues: residues 596–617 (PPGP…PPGY) and 654–665 (LGPPGPPGPPGQ). Positions 666-684 (AGPRGLPGLPGPVGKCDPG) are enriched in low complexity. A compositionally biased stretch (gly residues) spans 778-787 (GTPGRGGLDG). The short motif at 830-832 (RGD) is the Cell attachment site element. A compositionally biased stretch (low complexity) spans 861–876 (CPGEMGPPGQKGYPGA). Over residues 922–939 (KGEKGRPGAKGERGEKGK) the composition is skewed to basic and acidic residues. The segment covering 970–985 (RGNPGLPGPKGLEGLP) has biased composition (low complexity). The Cell attachment site motif lies at 994–996 (RGD). The segment covering 1092-1103 (SGPAGPDGAPGS) has biased composition (low complexity). Pro residues predominate over residues 1128–1146 (PGPPGSTGPPGPPGLPGLP). A Cell attachment site motif is present at residues 1152-1154 (RGD). Over residues 1228–1248 (PGAIIPGPKGDRGLPGLRGNP) the composition is skewed to low complexity. The segment covering 1250-1259 (EPGPPGPPGP) has biased composition (pro residues). A Cell attachment site motif is present at residues 1304–1306 (RGD). Positions 1333–1343 (PVGPKGPPGPR) are enriched in pro residues. 2 stretches are compositionally biased toward low complexity: residues 1366–1379 (QPGM…LGLP) and 1402–1429 (PAGT…LKGN). The interval 1425-1443 (GLKGNPGDRGTPATGTRMR) is epitope recognized by Goodpasture antibodies. A Collagen IV NC1 domain is found at 1444 to 1668 (GFIFTRHSQT…SRCQVCMKKR (225 aa)). Disulfide bonds link Cys1459/Cys1550, Cys1492/Cys1547, Cys1504/Cys1510, Cys1569/Cys1664, Cys1603/Cys1661, and Cys1615/Cys1621. Residues 1478 to 1556 (NKRAHGQDLG…CTVCEGPAMA (79 aa)) are required for the anti-angiogenic activity of tumstatin. Residue Met1532 forms an S-Lysyl-methionine sulfilimine (Met-Lys) (interchain with K-1650) linkage. The tract at residues 1609–1627 (ASPFIECHGRGTCNYYSNS) is required for the anti-tumor cell activity of tumstatin. Lys1650 is covalently cross-linked (S-Lysyl-methionine sulfilimine (Lys-Met) (interchain with M-1532)).

This sequence belongs to the type IV collagen family. In terms of assembly, there are six type IV collagen isoforms, alpha 1(IV)-alpha 6(IV), each of which can form a triple helix structure with 2 other chains to generate type IV collagen network. The alpha 3(IV) chain forms a triple helical protomer with alpha 4(IV) and alpha 5(IV); this triple helical structure dimerizes through NC1-NC1 domain interactions such that the alpha 3(IV), alpha 4(IV) and alpha 5(IV) chains of one protomer connect with the alpha 5(IV), alpha 4(IV) and alpha 3(IV) chains of the opposite promoter, respectively. Interacts with ITGB3. Associates with LAMB2 at the neuromuscular junction and in GBM. Post-translationally, prolines at the third position of the tripeptide repeating unit (G-X-Y) are hydroxylated in some or all of the chains. In terms of processing, type IV collagens contain numerous cysteine residues which are involved in inter- and intramolecular disulfide bonding. 12 of these, located in the NC1 domain, are conserved in all known type IV collagens. The trimeric structure of the NC1 domains is stabilized by covalent bonds between Lys and Met residues. Post-translationally, phosphorylated. Thought to be phosphorylated by CERT, but CERT does not have kinase activity. As to expression, highly expressed in kidney and lung. Detected at lower levels in heart, muscle and skin.

Its subcellular location is the secreted. It localises to the extracellular space. The protein localises to the extracellular matrix. It is found in the basement membrane. In terms of biological role, type IV collagen is the major structural component of glomerular basement membranes (GBM), forming a 'chicken-wire' meshwork together with laminins, proteoglycans and entactin/nidogen. Tumstatin, a cleavage fragment corresponding to the collagen alpha 3(IV) NC1 domain, possesses both anti-angiogenic and anti-tumor cell activity; these two anti-tumor properties may be regulated via RGD-independent ITGB3-mediated mechanisms. This is Collagen alpha-3(IV) chain from Mus musculus (Mouse).